The chain runs to 156 residues: Peptide methionine sulfoxide reductase MsrA (156 aa).

Cys-10 is a catalytic residue.

The protein belongs to the MsrA Met sulfoxide reductase family.

The catalysed reaction is L-methionyl-[protein] + [thioredoxin]-disulfide + H2O = L-methionyl-(S)-S-oxide-[protein] + [thioredoxin]-dithiol. It carries out the reaction [thioredoxin]-disulfide + L-methionine + H2O = L-methionine (S)-S-oxide + [thioredoxin]-dithiol. Functionally, has an important function as a repair enzyme for proteins that have been inactivated by oxidation. Catalyzes the reversible oxidation-reduction of methionine sulfoxide in proteins to methionine. The polypeptide is Peptide methionine sulfoxide reductase MsrA (Metamycoplasma arthritidis (strain 158L3-1) (Mycoplasma arthritidis)).